Here is a 392-residue protein sequence, read N- to C-terminus: L-rhamnonate dehydratase (392 aa).

Substrate is bound by residues His22 and Arg48. Mg(2+)-binding residues include Asp214, Glu240, and Glu268. Catalysis depends on His318, which acts as the Proton acceptor. A substrate-binding site is contributed by Glu338.

The protein belongs to the mandelate racemase/muconate lactonizing enzyme family. RhamD subfamily. In terms of assembly, homooctamer; tetramer of dimers. The cofactor is Mg(2+).

It carries out the reaction L-rhamnonate = 2-dehydro-3-deoxy-L-rhamnonate + H2O. In terms of biological role, catalyzes the dehydration of L-rhamnonate to 2-keto-3-deoxy-L-rhamnonate (KDR). This Burkholderia orbicola (strain MC0-3) protein is L-rhamnonate dehydratase.